Consider the following 1320-residue polypeptide: CAP-Gly domain-containing linker protein 1 (1320 aa).

The interval 1-53 is disordered; it reads MSMLKPSGLKAPTKILKPGSTALKTPAAAAAPLEKTVPSEKASGPPSSETQEE. The span at 21-35 shows a compositional bias: low complexity; the sequence is TALKTPAAAAAPLEK. Position 48 is a phosphoserine (Ser-48). Thr-50 carries the post-translational modification Phosphothreonine. The CAP-Gly 1 domain occupies 78–120; the sequence is GETQFAPGQWAGIVLDEPIGKNDGSVAGVRYFQCEPLKGIFTR. Residues 97-101 form an important for tubulin binding region; it reads GKNDG. Position 146 is a phosphoserine (Ser-146). The segment covering 156–171 has biased composition (polar residues); it reads VSSSPATPSNIPQKPS. The tract at residues 156 to 181 is disordered; it reads VSSSPATPSNIPQKPSQPVAKETSAT. Residue Thr-181 is modified to Phosphothreonine. Phosphoserine is present on residues Ser-194, Ser-196, Ser-199, and Ser-203. The CAP-Gly 2 domain occupies 231–273; that stretch reads GETDFAKGEWCGVELDEPLGKNDGAVAGTRYFQCQPKYGLFAP. Residues 301-331 show a composition bias toward low complexity; it reads TTPASLKRSPSASSLSSMSSVASSVSSKPSR. The segment at 301–338 is disordered; that stretch reads TTPASLKRSPSASSLSSMSSVASSVSSKPSRTGLLTET. Residue Ser-309 is modified to Phosphoserine. The residue at position 311 (Ser-311) is a Phosphoserine; by PKA. Phosphoserine occurs at positions 314 and 347. A disordered region spans residues 1089 to 1109; that stretch reads SLPSNTLRESEYRKDADEEKA. Positions 1096-1109 are enriched in basic and acidic residues; sequence RESEYRKDADEEKA. Position 1116 is a phosphoserine (Ser-1116). The disordered stretch occupies residues 1178 to 1201; the sequence is KRQLSSSSGNTDVQTEEDERAQES. Residues 1180–1190 are compositionally biased toward polar residues; sequence QLSSSSGNTDV. Residue Ser-1246 is modified to Phosphoserine. The CCHC-type zinc-finger motif lies at 1299 to 1316; sequence PYCEICEMFGHWATNCND.

Interacts with MTOR; phosphorylates and regulates CLIP1. Interacts (via CAP-Gly domains) with tubulin and TUBA1B. Interacts with SLAIN2. Interacts with MAPRE1 and MAPRE3. Interacts (via zinc finger) with DCTN1. Binds preferentially to tyrosinated microtubules, and only marginally to detyrosinated microtubules. In terms of processing, phosphorylated. Phosphorylation induces conformational changes by increasing the affinity of the N-terminus for C-terminus, resulting in inhibition of its function thus decreasing its binding to microtubules and DCTN1. Exhibits a folded, autoinhibited conformation when phosphorylated and an open conformation when dephosphorylated with increased binding affinity to microtubules and DCTN1. Phosphorylation regulates its recruitment to tyrosinated microtubules and the recruitment of vesicular cargo to microtubules in neurons. Phosphorylation by MTOR may positively regulate CLIP1 association with microtubules.

Its subcellular location is the cytoplasm. The protein localises to the cytoskeleton. It is found in the cytoplasmic vesicle membrane. The protein resides in the cell projection. It localises to the ruffle. Functionally, binds to the plus end of microtubules and regulates the dynamics of the microtubule cytoskeleton. Promotes microtubule growth and microtubule bundling. Links cytoplasmic vesicles to microtubules and thereby plays an important role in intracellular vesicle trafficking. Plays a role macropinocytosis and endosome trafficking. The sequence is that of CAP-Gly domain-containing linker protein 1 (Clip1) from Rattus norvegicus (Rat).